Reading from the N-terminus, the 188-residue chain is MSATETKYVPRLYKKYKEEVVPILQKKFNYKSPMQIPRLQKIVVNMGVGEAVQDIRQLERAVEDLRAITGQQPVITRARKSEAGFKLRKGMPIGCKVTLRKERMWDFLDKLISVALPRVKDFKGLSPRSFDGRGNYAFGIAEQIVFPEIDYDKVDRIRGMDIIINTTAETDEEAFWLLSLLGLPIRSM.

Belongs to the universal ribosomal protein uL5 family. Part of the 50S ribosomal subunit; part of the 5S rRNA/L5/L18/L25 subcomplex. Contacts the 5S rRNA and the P site tRNA. Forms a bridge to the 30S subunit in the 70S ribosome.

Its function is as follows. This is one of the proteins that bind and probably mediate the attachment of the 5S RNA into the large ribosomal subunit, where it forms part of the central protuberance. In the 70S ribosome it contacts protein S13 of the 30S subunit (bridge B1b), connecting the 2 subunits; this bridge is implicated in subunit movement. Contacts the P site tRNA; the 5S rRNA and some of its associated proteins might help stabilize positioning of ribosome-bound tRNAs. This Aquifex aeolicus (strain VF5) protein is Large ribosomal subunit protein uL5.